The following is a 370-amino-acid chain: ADP-ribosylhydrolase ARH3 (370 aa).

E47 lines the Mg(2+) pocket. Phosphothreonine is present on T70. 3 residues coordinate Mg(2+): T82, D83, and D84. D83 contacts substrate. Substrate is bound by residues 152–158 (KGSYGNG), H188, L241, and I277. Positions 320, 322, and 323 each coordinate Mg(2+).

It belongs to the ADP-ribosylglycohydrolase family. Monomer. The cofactor is Mg(2+). In terms of tissue distribution, ubiquitous.

It localises to the nucleus. Its subcellular location is the cytoplasm. The protein localises to the chromosome. The protein resides in the mitochondrion matrix. It carries out the reaction [(1''-&gt;2')-ADP-alpha-D-ribose](n) + H2O = [(1''-&gt;2')-ADP-alpha-D-ribose](n-1) + ADP-D-ribose. The catalysed reaction is 1''-O-acetyl-ADP-alpha-D-ribose + H2O = ADP-D-ribose + acetate + H(+). It catalyses the reaction O-(ADP-D-ribosyl)-L-seryl-[protein] + H2O = ADP-D-ribose + L-seryl-[protein]. The enzyme catalyses alpha-NAD(+) + H2O = ADP-D-ribose + nicotinamide + H(+). The protein undergoes a dramatic conformational switch from closed to open states upon substrate-binding, which enables specific substrate recognition for the 1''-O-linkage. The glutamate flap (Glu-47) blocks substrate entrance to Mg(2+) in the unliganded closed state. In presence of substrate, Glu-47 is ejected from the active site: this closed-to-open transition significantly widens the substrate-binding channel and precisely positions the scissile 1''-O-linkage for cleavage while securing tightly 2'- and 3'-hydroxyls of ADP-ribose. ADP-ribosylhydrolase that preferentially hydrolyzes the scissile alpha-O-linkage attached to the anomeric C1'' position of ADP-ribose and acts on different substrates, such as proteins ADP-ribosylated on serine and threonine, free poly(ADP-ribose) and O-acetyl-ADP-D-ribose. Specifically acts as a serine mono-ADP-ribosylhydrolase by mediating the removal of mono-ADP-ribose attached to serine residues on proteins, thereby playing a key role in DNA damage response. Serine ADP-ribosylation of proteins constitutes the primary form of ADP-ribosylation of proteins in response to DNA damage. Does not hydrolyze ADP-ribosyl-arginine, -cysteine, -diphthamide, or -asparagine bonds. Also able to degrade protein free poly(ADP-ribose), which is synthesized in response to DNA damage: free poly(ADP-ribose) acts as a potent cell death signal and its degradation by ADPRHL2 protects cells from poly(ADP-ribose)-dependent cell death, a process named parthanatos. Also hydrolyzes free poly(ADP-ribose) in mitochondria. Specifically digests O-acetyl-ADP-D-ribose, a product of deacetylation reactions catalyzed by sirtuins. Specifically degrades 1''-O-acetyl-ADP-D-ribose isomer, rather than 2''-O-acetyl-ADP-D-ribose or 3''-O-acetyl-ADP-D-ribose isomers. The protein is ADP-ribosylhydrolase ARH3 (Adprs) of Mus musculus (Mouse).